Here is a 121-residue protein sequence, read N- to C-terminus: Small ribosomal subunit protein uS11c (121 aa).

This sequence belongs to the universal ribosomal protein uS11 family. In terms of assembly, part of the 30S ribosomal subunit.

It is found in the plastid. The protein resides in the chloroplast. The sequence is that of Small ribosomal subunit protein uS11c from Cyanidioschyzon merolae (strain NIES-3377 / 10D) (Unicellular red alga).